We begin with the raw amino-acid sequence, 361 residues long: Methionine import ATP-binding protein MetN (361 aa).

The region spanning 22 to 257 (VRLIDVKRRF…PQTDITRSLL (236 aa)) is the ABC transporter domain. Residue 54–61 (GRSGAGKS) participates in ATP binding.

The protein belongs to the ABC transporter superfamily. Methionine importer (TC 3.A.1.24) family. As to quaternary structure, the complex is composed of two ATP-binding proteins (MetN), two transmembrane proteins (MetI) and a solute-binding protein (MetQ).

The protein resides in the cell inner membrane. It catalyses the reaction L-methionine(out) + ATP + H2O = L-methionine(in) + ADP + phosphate + H(+). The enzyme catalyses D-methionine(out) + ATP + H2O = D-methionine(in) + ADP + phosphate + H(+). In terms of biological role, part of the ABC transporter complex MetNIQ involved in methionine import. Responsible for energy coupling to the transport system. The chain is Methionine import ATP-binding protein MetN from Rhizobium etli (strain ATCC 51251 / DSM 11541 / JCM 21823 / NBRC 15573 / CFN 42).